Consider the following 155-residue polypeptide: Small ribosomal subunit protein uS7c (155 aa).

Belongs to the universal ribosomal protein uS7 family. In terms of assembly, part of the 30S ribosomal subunit.

The protein resides in the plastid. It is found in the chloroplast. One of the primary rRNA binding proteins, it binds directly to 16S rRNA where it nucleates assembly of the head domain of the 30S subunit. The protein is Small ribosomal subunit protein uS7c (rps7) of Allium textile (Textile onion).